Here is a 470-residue protein sequence, read N- to C-terminus: Ribulose bisphosphate carboxylase large chain (470 aa).

N6,N6,N6-trimethyllysine is present on K5. Residues N114 and T164 each contribute to the substrate site. K166 serves as the catalytic Proton acceptor. K168 lines the substrate pocket. The Mg(2+) site is built by K192, D194, and E195. K192 carries the N6-carboxylysine modification. Residue H285 is the Proton acceptor of the active site. Residues R286, H318, and S370 each contribute to the substrate site.

Belongs to the RuBisCO large chain family. Type I subfamily. In terms of assembly, heterohexadecamer of 8 large chains and 8 small chains; disulfide-linked. The disulfide link is formed within the large subunit homodimers. The cofactor is Mg(2+). The disulfide bond which can form in the large chain dimeric partners within the hexadecamer appears to be associated with oxidative stress and protein turnover.

Its subcellular location is the plastid. It localises to the chloroplast. The catalysed reaction is 2 (2R)-3-phosphoglycerate + 2 H(+) = D-ribulose 1,5-bisphosphate + CO2 + H2O. It catalyses the reaction D-ribulose 1,5-bisphosphate + O2 = 2-phosphoglycolate + (2R)-3-phosphoglycerate + 2 H(+). Its function is as follows. RuBisCO catalyzes two reactions: the carboxylation of D-ribulose 1,5-bisphosphate, the primary event in carbon dioxide fixation, as well as the oxidative fragmentation of the pentose substrate in the photorespiration process. Both reactions occur simultaneously and in competition at the same active site. This chain is Ribulose bisphosphate carboxylase large chain, found in Bertiera breviflora.